The chain runs to 597 residues: MSAILSADDLNDFISPGVACIKPVESLPQKESQSENPYEVTKEDKVQPENLPPAQISLTDCLACSGCVTSAEAVLISLQSHTEVLNTLDLYPELPLDFASDQRGTQNVGSADSDSRIFVASVSPQVRASLAATYGITEREAKYMIDQFLMGPHGLRAGGKHGNGFTWVVDTNVMREAVLALTADEVTNSLLSTGSGSLPKSPILSSACPGWICYAEKTHPFILPHLSRLKSPQALSGTFLKSVLSKALGVSPSQIWHLAIMPCFDKKLEASREELTDIAWASTSAESQTTPVRDVDCVITTRELLTLASARGLSLPNLPLKALPASCSTPFPDQALDSFLFSKSSSDQTVESGTSGGYLHHVLKIFQARNPGSKIVTQRGRNADVVEYVLMSSGDEPLLKAARYYGFRNIQNLVRKLKPARVSRLPGAKPQAVTSSANRRQPMSRNAAPAGTGADYAYVEVMACPGGCTNGGGQIRIEDAREAVPNALKETSTETPVAASKPTPHEQRARLARVDEAYYSADSDSEGSVTTEPVSVLSRDTKIHEFLKYWSEKIDIPLSQLAYTSYREVESDVGKTQNAPNETARVVELAGKIGGGW.

C20 contacts [4Fe-4S] cluster. The segment at 25-46 (ESLPQKESQSENPYEVTKEDKV) is disordered. [4Fe-4S] cluster is bound by residues C61, C64, C67, C208, and C263. The tract at residues 422–448 (VSRLPGAKPQAVTSSANRRQPMSRNAA) is disordered. Residues 432 to 444 (AVTSSANRRQPMS) show a composition bias toward polar residues. [4Fe-4S] cluster-binding residues include C464 and C468.

This sequence belongs to the NARF family.

Functionally, component of the cytosolic Fe/S protein assembly machinery. Required for maturation of extramitochondrial Fe/S proteins. May play a role in the transfer of pre-assembled Fe/S clusters to target apoproteins. This chain is Cytosolic Fe-S cluster assembly factor NAR1 (NAR1), found in Neosartorya fischeri (strain ATCC 1020 / DSM 3700 / CBS 544.65 / FGSC A1164 / JCM 1740 / NRRL 181 / WB 181) (Aspergillus fischerianus).